Consider the following 160-residue polypeptide: Transcriptional repressor NrdR (160 aa).

A zinc finger lies at 3–34; the sequence is CPYCQCEDTQVKDSRPAEEGAVIRRRRVCSVC. Residues 49–139 form the ATP-cone domain; sequence LLVLKKSGRR…VYRDFRNASD (91 aa).

It belongs to the NrdR family. Zn(2+) serves as cofactor.

Functionally, negatively regulates transcription of bacterial ribonucleotide reductase nrd genes and operons by binding to NrdR-boxes. The sequence is that of Transcriptional repressor NrdR from Bartonella bacilliformis (strain ATCC 35685 / KC583 / Herrer 020/F12,63).